We begin with the raw amino-acid sequence, 344 residues long: N-acetyl-gamma-glutamyl-phosphate reductase (344 aa).

The active site involves Cys-150.

It belongs to the NAGSA dehydrogenase family. Type 1 subfamily.

The protein localises to the cytoplasm. It catalyses the reaction N-acetyl-L-glutamate 5-semialdehyde + phosphate + NADP(+) = N-acetyl-L-glutamyl 5-phosphate + NADPH + H(+). It functions in the pathway amino-acid biosynthesis; L-arginine biosynthesis; N(2)-acetyl-L-ornithine from L-glutamate: step 3/4. In terms of biological role, catalyzes the NADPH-dependent reduction of N-acetyl-5-glutamyl phosphate to yield N-acetyl-L-glutamate 5-semialdehyde. The protein is N-acetyl-gamma-glutamyl-phosphate reductase of Pseudomonas putida (strain ATCC 700007 / DSM 6899 / JCM 31910 / BCRC 17059 / LMG 24140 / F1).